Consider the following 1145-residue polypeptide: Trafficking protein particle complex subunit 10 (1145 aa).

This sequence belongs to the TMEM1 family. As to quaternary structure, part of the multisubunit TRAPP (transport protein particle) complex. Interacts with Shal (via C-terminal dendritic targeting motif). Co-expressed with Shal in the nervous system.

Its subcellular location is the golgi apparatus. It localises to the cis-Golgi network. The protein localises to the cell projection. It is found in the dendrite. The protein resides in the perikaryon. In terms of biological role, may play a role in vesicular transport from endoplasmic reticulum to Golgi. Has a role in one of the several mechanisms underlying dendritic localization of Shal channels. This Drosophila melanogaster (Fruit fly) protein is Trafficking protein particle complex subunit 10 (SIDL).